The primary structure comprises 406 residues: Pyridinium-3,5-bisthiocarboxylic acid mononucleotide nickel insertion protein (406 aa).

It belongs to the LarC family.

The enzyme catalyses Ni(II)-pyridinium-3,5-bisthiocarboxylate mononucleotide = pyridinium-3,5-bisthiocarboxylate mononucleotide + Ni(2+). Its function is as follows. Involved in the biosynthesis of a nickel-pincer cofactor ((SCS)Ni(II) pincer complex). Binds Ni(2+), and functions in nickel delivery to pyridinium-3,5-bisthiocarboxylic acid mononucleotide (P2TMN), to form the mature cofactor. Is thus probably required for the activation of nickel-pincer cofactor-dependent enzymes. The polypeptide is Pyridinium-3,5-bisthiocarboxylic acid mononucleotide nickel insertion protein (Akkermansia muciniphila (strain ATCC BAA-835 / DSM 22959 / JCM 33894 / BCRC 81048 / CCUG 64013 / CIP 107961 / Muc)).